The chain runs to 193 residues: MAFILGSGSPRRLELLAQLGVTPDDIRPPDIDETPQKGELPRDYCARVTRQKAEAVTSNPEDLVLCADTTVVLGRRIMGKPRDAGEAAEFLLALSGRRHRVITSVALRKQDRLWQKDVVSQVKMKRLSDEELNAYLATGDWEGKAGGYAIQGPAGALIPWISGSFTAIVGLPLAETATLLQTAGYPLYKDTAS.

The active-site Proton acceptor is the aspartate 68.

The protein belongs to the Maf family. YhdE subfamily. It depends on a divalent metal cation as a cofactor.

It localises to the cytoplasm. The enzyme catalyses dTTP + H2O = dTMP + diphosphate + H(+). It carries out the reaction UTP + H2O = UMP + diphosphate + H(+). Functionally, nucleoside triphosphate pyrophosphatase that hydrolyzes dTTP and UTP. May have a dual role in cell division arrest and in preventing the incorporation of modified nucleotides into cellular nucleic acids. The chain is dTTP/UTP pyrophosphatase from Ruegeria sp. (strain TM1040) (Silicibacter sp.).